The primary structure comprises 458 residues: F-box/WD repeat-containing protein 9 (458 aa).

Met-1 carries the N-acetylmethionine modification. Disordered regions lie at residues Met-1–Ala-30 and Lys-42–Glu-64. The span at Asp-16 to Pro-26 shows a compositional bias: acidic residues. Residue Ser-18 is modified to Phosphoserine. Position 55 is a phosphothreonine (Thr-55). At Ser-59 the chain carries Phosphoserine. The F-box domain occupies Glu-76 to Arg-123. WD repeat units lie at residues Gly-171 to Asn-210, Lys-220 to Gly-261, Lys-264 to Lys-301, Leu-305 to Arg-342, Gln-344 to Ile-381, Gly-387 to Cys-424, and Arg-427 to Ala-458.

As to quaternary structure, interacts with SKP1 and CUL1.

Substrate-recognition component of the SCF (SKP1-CUL1-F-box protein)-type E3 ubiquitin ligase complex. The polypeptide is F-box/WD repeat-containing protein 9 (FBXW9) (Homo sapiens (Human)).